The primary structure comprises 192 residues: Inner membrane protein YohD (192 aa).

Over 1-40 (MDLNTLISQYGYAALVIGSLAEGETVTLLGGVAAHQGLLK) the chain is Periplasmic. Residues 41 to 61 (FPLVVLSVALGGMIGDQVLYL) traverse the membrane as a helical segment. Residues 62–121 (CGRRFGGKLLRRFSKHQDKIERAQKLIQRHPYLFVIGTRFMYGFRVIGPTLIGASQLPPK) lie on the Cytoplasmic side of the membrane. Residues 122–142 (IFLPLNILGAFAWALIFTTIG) form a helical membrane-spanning segment. The Periplasmic portion of the chain corresponds to 143-159 (YAGGQVIAPWLHNLDQH). Residues 160-180 (LKHWVWLILVVVLVVGVRWWL) traverse the membrane as a helical segment. Residues 181–192 (KRRGKKKPDHQA) are Cytoplasmic-facing.

It belongs to the DedA family.

It is found in the cell inner membrane. In Escherichia coli (strain K12), this protein is Inner membrane protein YohD (yohD).